Here is a 160-residue protein sequence, read N- to C-terminus: SsrA-binding protein (160 aa).

Belongs to the SmpB family.

It is found in the cytoplasm. Its function is as follows. Required for rescue of stalled ribosomes mediated by trans-translation. Binds to transfer-messenger RNA (tmRNA), required for stable association of tmRNA with ribosomes. tmRNA and SmpB together mimic tRNA shape, replacing the anticodon stem-loop with SmpB. tmRNA is encoded by the ssrA gene; the 2 termini fold to resemble tRNA(Ala) and it encodes a 'tag peptide', a short internal open reading frame. During trans-translation Ala-aminoacylated tmRNA acts like a tRNA, entering the A-site of stalled ribosomes, displacing the stalled mRNA. The ribosome then switches to translate the ORF on the tmRNA; the nascent peptide is terminated with the 'tag peptide' encoded by the tmRNA and targeted for degradation. The ribosome is freed to recommence translation, which seems to be the essential function of trans-translation. The chain is SsrA-binding protein from Citrobacter koseri (strain ATCC BAA-895 / CDC 4225-83 / SGSC4696).